The primary structure comprises 371 residues: Archaeal glycosylation protein Q (371 aa).

A disordered region spans residues 19–39; sequence QRSDGSMPAGHNGPYHDPETP.

Its subcellular location is the cytoplasm. Its pathway is cell surface structure biogenesis; S-layer biogenesis. Putative isomerase involved in the N-glycosylation pathway. Required for the appearance of the methyl ester of hexuronic acid found at position four of the pentasaccharide N-linked to the S-layer glycoprotein. Either involved in preparing the third sugar for attachment of the fourth pentasaccharide subunit or processing the fourth sugar prior to its addition to the lipid-linked trisaccharide. This chain is Archaeal glycosylation protein Q (aglQ), found in Haloferax volcanii (strain ATCC 29605 / DSM 3757 / JCM 8879 / NBRC 14742 / NCIMB 2012 / VKM B-1768 / DS2) (Halobacterium volcanii).